The sequence spans 248 residues: 3-deoxy-manno-octulosonate cytidylyltransferase (248 aa).

It belongs to the KdsB family.

The protein localises to the cytoplasm. The catalysed reaction is 3-deoxy-alpha-D-manno-oct-2-ulosonate + CTP = CMP-3-deoxy-beta-D-manno-octulosonate + diphosphate. It functions in the pathway nucleotide-sugar biosynthesis; CMP-3-deoxy-D-manno-octulosonate biosynthesis; CMP-3-deoxy-D-manno-octulosonate from 3-deoxy-D-manno-octulosonate and CTP: step 1/1. It participates in bacterial outer membrane biogenesis; lipopolysaccharide biosynthesis. In terms of biological role, activates KDO (a required 8-carbon sugar) for incorporation into bacterial lipopolysaccharide in Gram-negative bacteria. The sequence is that of 3-deoxy-manno-octulosonate cytidylyltransferase from Escherichia coli (strain K12 / MC4100 / BW2952).